A 314-amino-acid chain; its full sequence is Lipoyl synthase (314 aa).

Positions 40, 45, 51, 67, 71, 74, and 280 each coordinate [4Fe-4S] cluster. The Radical SAM core domain occupies serine 53–serine 269.

The protein belongs to the radical SAM superfamily. Lipoyl synthase family. It depends on [4Fe-4S] cluster as a cofactor.

The protein localises to the cytoplasm. The enzyme catalyses [[Fe-S] cluster scaffold protein carrying a second [4Fe-4S](2+) cluster] + N(6)-octanoyl-L-lysyl-[protein] + 2 oxidized [2Fe-2S]-[ferredoxin] + 2 S-adenosyl-L-methionine + 4 H(+) = [[Fe-S] cluster scaffold protein] + N(6)-[(R)-dihydrolipoyl]-L-lysyl-[protein] + 4 Fe(3+) + 2 hydrogen sulfide + 2 5'-deoxyadenosine + 2 L-methionine + 2 reduced [2Fe-2S]-[ferredoxin]. The protein operates within protein modification; protein lipoylation via endogenous pathway; protein N(6)-(lipoyl)lysine from octanoyl-[acyl-carrier-protein]. Its function is as follows. Catalyzes the radical-mediated insertion of two sulfur atoms into the C-6 and C-8 positions of the octanoyl moiety bound to the lipoyl domains of lipoate-dependent enzymes, thereby converting the octanoylated domains into lipoylated derivatives. The polypeptide is Lipoyl synthase (Oceanobacillus iheyensis (strain DSM 14371 / CIP 107618 / JCM 11309 / KCTC 3954 / HTE831)).